The sequence spans 241 residues: Nicotinamide riboside kinase (241 aa).

21 to 29 contacts ATP; that stretch reads GCSSSGKST. Mg(2+) is bound by residues S28 and D47. Residue D47 is the Proton acceptor of the active site. Residues 47 to 50, 67 to 68, and D68 contribute to the substrate site; these read DDFY and WD. R163 provides a ligand contact to ATP. R164 provides a ligand contact to substrate. ATP-binding positions include R167, 167–169, and 213–215; these read RGG and DVQ. Residue 169–170 participates in substrate binding; that stretch reads GY.

The protein belongs to the uridine kinase family. NRK subfamily.

It carries out the reaction beta-nicotinamide D-riboside + ATP = beta-nicotinamide D-ribonucleotide + ADP + H(+). The catalysed reaction is beta-D-ribosylnicotinate + ATP = nicotinate beta-D-ribonucleotide + ADP + H(+). Its pathway is cofactor biosynthesis; NAD(+) biosynthesis. Its function is as follows. Catalyzes the phosphorylation of nicotinamide riboside (NR) and nicotinic acid riboside (NaR) to form nicotinamide mononucleotide (NMN) and nicotinic acid mononucleotide (NaMN). The chain is Nicotinamide riboside kinase (NRK1) from Eremothecium gossypii (strain ATCC 10895 / CBS 109.51 / FGSC 9923 / NRRL Y-1056) (Yeast).